Here is a 1284-residue protein sequence, read N- to C-terminus: MSSGDPAHLGLCLWLWLGATLGREQVQASGLLRLAVLPEDRLQMKWRESEGSGLGYLVQVKPMAGDSEQEVILTTKTPKATVGGLSPSKGYTLQIFELTGSGRFLLARREFVIEDLKSSSLDRSSQRPLGSGAPEPTPSHTGSPDPEQASEPQVAFTPSQDPRTPAGPQFRCLPPVPADMVFLVDGSWSIGHSHFQQVKDFLASVIAPFEIGPDKVQVGLTQYSGDAQTEWDLNSLSTKEQVLAAVRRLRYKGGNTFTGLALTHVLGQNLQPAAGLRPEAAKVVILVTDGKSQDDVHTAARVLKDLGVNVFAVGVKNADEAELRLLASPPRDITVHSVLDFLQLGALAGLLSRLICQRLQGGSPRQGPAAAPALDTLPAPTSLVLSQVTSSSIRLSWTPAPRHPLKYLIVWRASRGGTPREVVVEGPAASTELHNLASRTEYLVSVFPIYEGGVGEGLRGLVTTAPLPPPRALTLAAVTPRTVHLTWQPSAGATHYLVRCSPASPKGEEEEREVQVGRPEVLLDGLEPGRDYEVSVQSLRGPEGSEARGIRARTPTLAPPRHLGFSDVSHDAARVFWEGAPRPVRLVRVTYVSSEGGHSGQTEAPGNATSATLGPLSSSTTYTVRVTCLYPGGGSSTLTGRVTTKKAPSPSQLSMTELPGDAVQLAWVAAAPSGVLVYQITWTPLGEGKAHEISVPGNLGTAVLPGLGRHTEYDVTILAYYRDGARSDPVSLRYTPSTVSRSPPSNLALASETPDSLQVSWTPPLGRVLHYWLTYAPASGLGPEKSVSVPGARSHVTLPDLQAATKYRVLVSAIYAAGRSEAVSATGQTACPALRPDGSLPGFDLMVAFSLVEKAYASIRGVAMEPSAFGGTPTFTLFKDAQLTRRVSDVYPAPLPPEHTIVFLVRLLPETPREAFALWQMTAEDFQPLLGVLLDAGKKSLTYFHRDPRAALQEATFDPQEVRKIFFGSFHKVHVAVGRSKVRLYVDCRKVAERPLGEMGSPPAAGFVTLGRLAKARGPRSSSAAFQLQMLQIVCSDTWADEDRCCELPASRDGETCPAFVSACSCSSETPGPPGPQGPPGLPGRNGTPGEQGFPGPRGPPGVKGEKGDHGLPGLQGHPGHQGIPGRVGLQGPKGMRGLEGTAGLPGPPGPRGFQGMAGARGTSGERGPPGTVGPTGLPGPKGERGEKGEPQSLATLYQLVSQASHVSKFDSFHENTRPPMPILEQKLEPGTEPLGSPGTRSKALVPGEWGRGGRHLEGRGEPGAVGQMGSPGQQGASTQGLWE.

The first 22 residues, 1 to 22 (MSSGDPAHLGLCLWLWLGATLG), serve as a signal peptide directing secretion. The Fibronectin type-III 1 domain maps to 28-119 (ASGLLRLAVL…EFVIEDLKSS (92 aa)). A disordered region spans residues 122–171 (DRSSQRPLGSGAPEPTPSHTGSPDPEQASEPQVAFTPSQDPRTPAGPQFR). Residues 179–354 (DMVFLVDGSW…GALAGLLSRL (176 aa)) form the VWFA domain. Fibronectin type-III domains lie at 379–468 (APTS…APLP), 469–559 (PPRA…TLAP), 560–647 (PRHL…TKKA), 649–738 (SPSQ…TPST), and 743–833 (PPSN…ACPA). Asparagine 607 carries an N-linked (GlcNAc...) asparagine glycan. The 196-residue stretch at 842-1037 (GFDLMVAFSL…LQMLQIVCSD (196 aa)) folds into the Laminin G-like domain. Disordered regions lie at residues 1065–1190 (SCSS…EKGE) and 1212–1284 (SFHE…GLWE). Positions 1071 to 1082 (PGPPGPQGPPGL) are enriched in pro residues. 2 Collagen-like domains span residues 1071–1127 (PGPP…IPGR) and 1133–1190 (PKGM…EKGE). Low complexity-rich tracts occupy residues 1112–1125 (LPGL…QGIP) and 1166–1181 (ERGP…LPGP). The segment covering 1271-1284 (SPGQQGASTQGLWE) has biased composition (polar residues).

In terms of tissue distribution, high expression in heart, lung, liver, skeletal muscle, kidney, pancreas, spleen, testis, ovary, subthalamic nucleus and fetal liver. Weak expression in other tissues tested.

It localises to the secreted. The protein localises to the extracellular space. In terms of biological role, probable collagen protein. This chain is Collagen alpha-1(XX) chain (COL20A1), found in Homo sapiens (Human).